The following is a 138-amino-acid chain: Transcription antitermination protein NusB (138 aa).

This sequence belongs to the NusB family.

In terms of biological role, involved in transcription antitermination. Required for transcription of ribosomal RNA (rRNA) genes. Binds specifically to the boxA antiterminator sequence of the ribosomal RNA (rrn) operons. In Photorhabdus laumondii subsp. laumondii (strain DSM 15139 / CIP 105565 / TT01) (Photorhabdus luminescens subsp. laumondii), this protein is Transcription antitermination protein NusB.